The chain runs to 160 residues: Small ribosomal subunit protein uS7 (160 aa).

It belongs to the universal ribosomal protein uS7 family. In terms of assembly, part of the 30S ribosomal subunit. Contacts proteins S9 and S11.

Its function is as follows. One of the primary rRNA binding proteins, it binds directly to 16S rRNA where it nucleates assembly of the head domain of the 30S subunit. Is located at the subunit interface close to the decoding center, probably blocks exit of the E-site tRNA. This is Small ribosomal subunit protein uS7 from Ehrlichia canis (strain Jake).